A 909-amino-acid chain; its full sequence is E3 ubiquitin-protein ligase HACE1 (909 aa).

The interval 1 to 21 (MERAMEQLNRLTRSLRRARTV) is N-terminal helix important for homodimerization. ANK repeat units lie at residues 23–55 (LPED…NSKF), 64–93 (VKRS…NPNY), 97–126 (SGCT…DVNI), 130–159 (EGLT…DVDV), 163–192 (MGQT…DINR), 196–226 (SGAT…YLPD), and 228–253 (NGVT…QYHP). The interval 398–433 (QDQDAASIPPFEPPGPGSYENLSTGTRESKPDALAG) is disordered. Residues 574 to 909 (NCAKLKQGIA…HCGSYGYTMA (336 aa)) form the HECT domain. The active-site Glycyl thioester intermediate is Cys876.

In terms of assembly, homodimer. The homodimer is autoinhibited and stabilized by its N-terminal helix. Interacts with RAB1 (RAB1A, RAB1B or RAB1C), RAB4 (RAB4A or RAB4B) and RAB11 (RAB11A or RAB11B); in a GTP-dependent manner. Interacts with the 26S proteasomal complex through the 20S core proteasomal subunit. Interacts with RARB. Autoubiquitinated. Expressed in multiple tissues including heart, brain and kidney.

It is found in the golgi apparatus. The protein localises to the golgi stack membrane. It localises to the cytoplasm. Its subcellular location is the endoplasmic reticulum. The catalysed reaction is S-ubiquitinyl-[E2 ubiquitin-conjugating enzyme]-L-cysteine + [acceptor protein]-L-lysine = [E2 ubiquitin-conjugating enzyme]-L-cysteine + N(6)-ubiquitinyl-[acceptor protein]-L-lysine.. The protein operates within protein modification; protein ubiquitination. Its activity is regulated as follows. Sterically autoinhibited in its dimeric state. In terms of biological role, E3 ubiquitin-protein ligase involved in Golgi membrane fusion and regulation of small GTPases. Acts as a regulator of Golgi membrane dynamics during the cell cycle: recruited to Golgi membrane by Rab proteins and regulates postmitotic Golgi membrane fusion. Acts by mediating ubiquitination during mitotic Golgi disassembly, ubiquitination serving as a signal for Golgi reassembly later, after cell division. Specifically binds GTP-bound RAC1, mediating ubiquitination and subsequent degradation of active RAC1, thereby playing a role in host defense against pathogens. May also act as a transcription regulator via its interaction with RARB. This Homo sapiens (Human) protein is E3 ubiquitin-protein ligase HACE1 (HACE1).